A 232-amino-acid polypeptide reads, in one-letter code: 2-C-methyl-D-erythritol 4-phosphate cytidylyltransferase (232 aa).

This sequence belongs to the IspD/TarI cytidylyltransferase family. IspD subfamily.

It catalyses the reaction 2-C-methyl-D-erythritol 4-phosphate + CTP + H(+) = 4-CDP-2-C-methyl-D-erythritol + diphosphate. Its pathway is isoprenoid biosynthesis; isopentenyl diphosphate biosynthesis via DXP pathway; isopentenyl diphosphate from 1-deoxy-D-xylulose 5-phosphate: step 2/6. In terms of biological role, catalyzes the formation of 4-diphosphocytidyl-2-C-methyl-D-erythritol from CTP and 2-C-methyl-D-erythritol 4-phosphate (MEP). The sequence is that of 2-C-methyl-D-erythritol 4-phosphate cytidylyltransferase from Rhodococcus erythropolis (strain PR4 / NBRC 100887).